We begin with the raw amino-acid sequence, 387 residues long: O-methyltransferase asqD (387 aa).

An S-adenosyl-L-methionine-binding site is contributed by D252. Residue H294 is the Proton acceptor of the active site.

Belongs to the class I-like SAM-binding methyltransferase superfamily. Cation-independent O-methyltransferase family.

The protein operates within secondary metabolite biosynthesis. Its pathway is alkaloid biosynthesis. It functions in the pathway mycotoxin biosynthesis. Functionally, O-methyltransferase; part of the gene cluster that mediates the biosynthesis of the aspoquinolone mycotoxins. The role of asqD within the aspoquinolone pathway has still to be determined. The first step of the pathway is catalyzed by the nonribosomal peptide synthetase asqK that condenses anthranilic acid and O-methyl-L-tyrosine to produce 4'-methoxycyclopeptin. 4'-methoxycyclopeptin is then converted to 4'-methoxydehydrocyclopeptin by the ketoglutarate-dependent dioxygenase asqJ. AsqJ also converts its first product 4'-methoxydehydrocyclopeptin to 4'-methoxycyclopenin. The following conversion of 4'-methoxycyclopenin into 4'-methoxyviridicatin is catalyzed by the cyclopenase asqI. 4'-methoxyviridicatin is the precursor of quinolone natural products, and is further converted to quinolinone B. The prenyltransferase asqH1 then catalyzes the canonical Friedel-Crafts alkylation of quinolinone B with dimethylallyl cation to yield dimethylallyl quinolone, which is subjected to FAD-dependent dehydrogenation by the FAD-linked oxidoreductase asqF to yield conjugated aryl diene. The delta(3') double bond then serves as the site of the second alkylation with DMAPP catalyzed by the prenyltransferase asqH2 to yield a carbenium ion intermediate, which can be attacked by H(2)O to yield a styrenyl quinolone containing a C3'-hydroxyprenyl chain. The FAD-dependent monooxygenase asqG performs epoxidation of the terminal C7'-C8' olefin. Finally, after dehydratation of the epoxide at C3 by asqC, the quinolone epoxide rearrangement protein asqO catalyzes an enzymatic 3-exo-tet cyclization to yield the cyclopropyl-THF ring system in aspoquinolone. The protein is O-methyltransferase asqD of Emericella nidulans (strain FGSC A4 / ATCC 38163 / CBS 112.46 / NRRL 194 / M139) (Aspergillus nidulans).